The chain runs to 390 residues: Alanine racemase (390 aa).

K46 functions as the Proton acceptor; specific for D-alanine in the catalytic mechanism. N6-(pyridoxal phosphate)lysine is present on K46. Residue R144 coordinates substrate. The Proton acceptor; specific for L-alanine role is filled by Y275. A substrate-binding site is contributed by M323.

Belongs to the alanine racemase family. It depends on pyridoxal 5'-phosphate as a cofactor.

The catalysed reaction is L-alanine = D-alanine. Its pathway is amino-acid biosynthesis; D-alanine biosynthesis; D-alanine from L-alanine: step 1/1. Catalyzes the interconversion of L-alanine and D-alanine. May also act on other amino acids. This is Alanine racemase (alr) from Mycolicibacterium vanbaalenii (strain DSM 7251 / JCM 13017 / BCRC 16820 / KCTC 9966 / NRRL B-24157 / PYR-1) (Mycobacterium vanbaalenii).